The chain runs to 267 residues: Cytochrome b (267 aa).

Helical transmembrane passes span phenylalanine 33–methionine 53, tryptophan 77–valine 98, tryptophan 113–leucine 133, and phenylalanine 178–leucine 198. Positions 83 and 97 each coordinate heme b. Positions 182 and 196 each coordinate heme b. Residue histidine 201 participates in a ubiquinone binding. Residues isoleucine 226–phenylalanine 246 traverse the membrane as a helical segment.

Belongs to the cytochrome b family. The cytochrome bc1 complex contains 11 subunits: 3 respiratory subunits (MT-CYB, CYC1 and UQCRFS1), 2 core proteins (UQCRC1 and UQCRC2) and 6 low-molecular weight proteins (UQCRH/QCR6, UQCRB/QCR7, UQCRQ/QCR8, UQCR10/QCR9, UQCR11/QCR10 and a cleavage product of UQCRFS1). This cytochrome bc1 complex then forms a dimer. The cofactor is heme b.

Its subcellular location is the mitochondrion inner membrane. In terms of biological role, component of the ubiquinol-cytochrome c reductase complex (complex III or cytochrome b-c1 complex) that is part of the mitochondrial respiratory chain. The b-c1 complex mediates electron transfer from ubiquinol to cytochrome c. Contributes to the generation of a proton gradient across the mitochondrial membrane that is then used for ATP synthesis. The protein is Cytochrome b (MT-CYB) of Abrothrix olivaceus (Olive grass mouse).